We begin with the raw amino-acid sequence, 990 residues long: Bifunctional glutamine synthetase adenylyltransferase/adenylyl-removing enzyme (990 aa).

Residues 1–474 are adenylyl removase; sequence MIFSAITADL…HYAKLFEGDP (474 aa). Residues 478 to 990 form an adenylyl transferase region; it reads AKLPPVDYGA…FNRLIGGEDA (513 aa).

It belongs to the GlnE family. The cofactor is Mg(2+).

It carries out the reaction [glutamine synthetase]-O(4)-(5'-adenylyl)-L-tyrosine + phosphate = [glutamine synthetase]-L-tyrosine + ADP. The enzyme catalyses [glutamine synthetase]-L-tyrosine + ATP = [glutamine synthetase]-O(4)-(5'-adenylyl)-L-tyrosine + diphosphate. Its function is as follows. Involved in the regulation of glutamine synthetase GlnA, a key enzyme in the process to assimilate ammonia. When cellular nitrogen levels are high, the C-terminal adenylyl transferase (AT) inactivates GlnA by covalent transfer of an adenylyl group from ATP to specific tyrosine residue of GlnA, thus reducing its activity. Conversely, when nitrogen levels are low, the N-terminal adenylyl removase (AR) activates GlnA by removing the adenylyl group by phosphorolysis, increasing its activity. The regulatory region of GlnE binds the signal transduction protein PII (GlnB) which indicates the nitrogen status of the cell. This Rhodopseudomonas palustris (strain TIE-1) protein is Bifunctional glutamine synthetase adenylyltransferase/adenylyl-removing enzyme.